Reading from the N-terminus, the 295-residue chain is Ribosomal protein L11 methyltransferase (295 aa).

Residues threonine 150, glycine 171, aspartate 193, and asparagine 232 each contribute to the S-adenosyl-L-methionine site.

This sequence belongs to the methyltransferase superfamily. PrmA family.

It localises to the cytoplasm. The catalysed reaction is L-lysyl-[protein] + 3 S-adenosyl-L-methionine = N(6),N(6),N(6)-trimethyl-L-lysyl-[protein] + 3 S-adenosyl-L-homocysteine + 3 H(+). In terms of biological role, methylates ribosomal protein L11. The chain is Ribosomal protein L11 methyltransferase from Methylobacillus flagellatus (strain ATCC 51484 / DSM 6875 / VKM B-1610 / KT).